The primary structure comprises 95 residues: HIG1 domain family member 1A, mitochondrial (95 aa).

Ser2 is subject to N-acetylserine. One can recognise an HIG1 domain in the interval 2–93 (STNTDLSLSS…YQEFWANPKP (92 aa)). Ser8 carries the post-translational modification Phosphoserine. Helical transmembrane passes span 28 to 48 (PFVP…LYKL) and 69 to 89 (GFVV…EFWA).

In terms of assembly, associates with cytochrome c oxidase (COX, complex IV); proposed complex component. Also associates with respiratory chain supercomplexes.

The protein resides in the mitochondrion membrane. The protein localises to the mitochondrion inner membrane. Proposed subunit of cytochrome c oxidase (COX, complex IV), which is the terminal component of the mitochondrial respiratory chain that catalyzes the reduction of oxygen to water. May play a role in the assembly of respiratory supercomplexes. The chain is HIG1 domain family member 1A, mitochondrial (Higd1a) from Mus musculus (Mouse).